Here is a 72-residue protein sequence, read N- to C-terminus: MAGNDVIEIEGVIKETKPNANFIVELENGARIQAGVSGKIRKNYIRILVGDRVTVEMSPYDLTKGRITYRHK.

One can recognise an S1-like domain in the interval 1 to 72; sequence MAGNDVIEIE…TKGRITYRHK (72 aa).

The protein belongs to the IF-1 family. As to quaternary structure, component of the 30S ribosomal translation pre-initiation complex which assembles on the 30S ribosome in the order IF-2 and IF-3, IF-1 and N-formylmethionyl-tRNA(fMet); mRNA recruitment can occur at any time during PIC assembly.

It is found in the cytoplasm. Functionally, one of the essential components for the initiation of protein synthesis. Stabilizes the binding of IF-2 and IF-3 on the 30S subunit to which N-formylmethionyl-tRNA(fMet) subsequently binds. Helps modulate mRNA selection, yielding the 30S pre-initiation complex (PIC). Upon addition of the 50S ribosomal subunit IF-1, IF-2 and IF-3 are released leaving the mature 70S translation initiation complex. This chain is Translation initiation factor IF-1, found in Oenococcus oeni (strain ATCC BAA-331 / PSU-1).